The following is a 701-amino-acid chain: DNA ligase (701 aa).

Residues Asp43–Asp47, Ser92–Leu93, and Glu126 each bind NAD(+). Lys128 acts as the N6-AMP-lysine intermediate in catalysis. 4 residues coordinate NAD(+): Arg149, Glu186, Lys302, and Lys326. Zn(2+) is bound by residues Cys420, Cys423, Cys444, and Cys450. Positions Ala623–Ala701 constitute a BRCT domain.

The protein belongs to the NAD-dependent DNA ligase family. LigA subfamily. Requires Mg(2+) as cofactor. Mn(2+) serves as cofactor.

The enzyme catalyses NAD(+) + (deoxyribonucleotide)n-3'-hydroxyl + 5'-phospho-(deoxyribonucleotide)m = (deoxyribonucleotide)n+m + AMP + beta-nicotinamide D-nucleotide.. Its function is as follows. DNA ligase that catalyzes the formation of phosphodiester linkages between 5'-phosphoryl and 3'-hydroxyl groups in double-stranded DNA using NAD as a coenzyme and as the energy source for the reaction. It is essential for DNA replication and repair of damaged DNA. This Maricaulis maris (strain MCS10) (Caulobacter maris) protein is DNA ligase.